The primary structure comprises 117 residues: NADH-ubiquinone oxidoreductase chain 3 (117 aa).

3 helical membrane passes run 4-24 (IILI…LASI), 60-80 (ITII…MIII), and 86-106 (IMIW…GLYH).

This sequence belongs to the complex I subunit 3 family.

The protein resides in the mitochondrion membrane. The enzyme catalyses a ubiquinone + NADH + 5 H(+)(in) = a ubiquinol + NAD(+) + 4 H(+)(out). Functionally, core subunit of the mitochondrial membrane respiratory chain NADH dehydrogenase (Complex I) that is believed to belong to the minimal assembly required for catalysis. Complex I functions in the transfer of electrons from NADH to the respiratory chain. The immediate electron acceptor for the enzyme is believed to be ubiquinone. The chain is NADH-ubiquinone oxidoreductase chain 3 (mt:ND3) from Drosophila subobscura (Fruit fly).